An 82-amino-acid polypeptide reads, in one-letter code: Small ribosomal subunit protein bS16 (82 aa).

This sequence belongs to the bacterial ribosomal protein bS16 family.

The sequence is that of Small ribosomal subunit protein bS16 from Francisella tularensis subsp. tularensis (strain FSC 198).